Here is a 389-residue protein sequence, read N- to C-terminus: Tubby-like F-box protein 11 (389 aa).

Residues 36-82 form the F-box domain; the sequence is DYRWSEIPEELLREILIRVEAADGGGWPSRRSVVACAGVCRGWRLLM. Positions 250 to 289 are disordered; sequence STMEPQGVASEPSEFPLLGTRSTLSRSQSKPLRSSSSHLK. Positions 273 to 286 are enriched in low complexity; sequence LSRSQSKPLRSSSS.

This sequence belongs to the TUB family. In terms of tissue distribution, ubiquitous.

This is Tubby-like F-box protein 11 from Arabidopsis thaliana (Mouse-ear cress).